The chain runs to 221 residues: DNA mismatch repair protein MutH (221 aa).

It belongs to the MutH family.

It is found in the cytoplasm. In terms of biological role, sequence-specific endonuclease that cleaves unmethylated GATC sequences. It is involved in DNA mismatch repair. This chain is DNA mismatch repair protein MutH, found in Vibrio cholerae serotype O1 (strain ATCC 39315 / El Tor Inaba N16961).